Here is an 85-residue protein sequence, read N- to C-terminus: U4-theraphotoxin-Hhn1q (85 aa).

An N-terminal signal peptide occupies residues 1–22; that stretch reads MKVTLIAILTCAAVLVLHTTAA. Positions 23-48 are excised as a propeptide; sequence EELEAESQLMEVGMPDTELAAVDEER. Cystine bridges form between C52–C66, C56–C77, and C71–C82.

The protein belongs to the neurotoxin 12 (Hwtx-2) family. 02 (Hwtx-2) subfamily. In terms of tissue distribution, expressed by the venom gland.

Its subcellular location is the secreted. Postsynaptic neurotoxin. This chain is U4-theraphotoxin-Hhn1q, found in Cyriopagopus hainanus (Chinese bird spider).